We begin with the raw amino-acid sequence, 320 residues long: MTLTVSPTAARTPAEEKARFEGNKLAKRLARETTRAIADYNMIEAGDKVMVCLSGGKDSYALLDILLSLQKRAPFAFEIIAVNLDQKQPGFPPEILPGYLRALGVPFHIETQDTYSIVTRVIPEGKTMCSLCSRLRRGILYRVASELGATKIALGHHRDDILGTFFLNLFYGGKAKGMPPKLVSDDGRHTVIRPLAYVPESDLIAYAQFKQFPIIPCNLCGSQENLKRKEVGRMIQEWDRKHPGRSWNVFNALSRVVPSHLMDRDLFDFVGLKPTGVADAGGDTAFDQIDPEPDTAGPGCASDAPAGQADGMAEQRVVFR.

The short motif at 54-59 (SGGKDS) is the PP-loop motif element. Residues C129, C132, and C220 each contribute to the [4Fe-4S] cluster site.

The protein belongs to the TtcA family. In terms of assembly, homodimer. Requires Mg(2+) as cofactor. [4Fe-4S] cluster serves as cofactor.

The protein resides in the cytoplasm. It catalyses the reaction cytidine(32) in tRNA + S-sulfanyl-L-cysteinyl-[cysteine desulfurase] + AH2 + ATP = 2-thiocytidine(32) in tRNA + L-cysteinyl-[cysteine desulfurase] + A + AMP + diphosphate + H(+). The protein operates within tRNA modification. Catalyzes the ATP-dependent 2-thiolation of cytidine in position 32 of tRNA, to form 2-thiocytidine (s(2)C32). The sulfur atoms are provided by the cysteine/cysteine desulfurase (IscS) system. This chain is tRNA-cytidine(32) 2-sulfurtransferase, found in Bordetella parapertussis (strain 12822 / ATCC BAA-587 / NCTC 13253).